Reading from the N-terminus, the 264-residue chain is Thiazole synthase (264 aa).

The active-site Schiff-base intermediate with DXP is the Lys-106. Residues Gly-167, 193–194 (AG), and 215–216 (NT) each bind 1-deoxy-D-xylulose 5-phosphate.

The protein belongs to the ThiG family. In terms of assembly, homotetramer. Forms heterodimers with either ThiH or ThiS.

It localises to the cytoplasm. It carries out the reaction [ThiS sulfur-carrier protein]-C-terminal-Gly-aminoethanethioate + 2-iminoacetate + 1-deoxy-D-xylulose 5-phosphate = [ThiS sulfur-carrier protein]-C-terminal Gly-Gly + 2-[(2R,5Z)-2-carboxy-4-methylthiazol-5(2H)-ylidene]ethyl phosphate + 2 H2O + H(+). It participates in cofactor biosynthesis; thiamine diphosphate biosynthesis. Catalyzes the rearrangement of 1-deoxy-D-xylulose 5-phosphate (DXP) to produce the thiazole phosphate moiety of thiamine. Sulfur is provided by the thiocarboxylate moiety of the carrier protein ThiS. In vitro, sulfur can be provided by H(2)S. The sequence is that of Thiazole synthase from Stenotrophomonas maltophilia (strain K279a).